An 80-amino-acid chain; its full sequence is RNA-binding protein Hfq (80 aa).

In terms of domain architecture, Sm spans 9–68 (EPFLNALRKERIPVSIYLVNGIKLQGQIDSFDQFVVLLKNTVSQMVYKHAISTIVPSRPV).

The protein belongs to the Hfq family. In terms of assembly, homohexamer.

Its function is as follows. RNA chaperone that binds small regulatory RNA (sRNAs) and mRNAs to facilitate mRNA translational regulation in response to envelope stress, environmental stress and changes in metabolite concentrations. Also binds with high specificity to tRNAs. The polypeptide is RNA-binding protein Hfq (Thioalkalivibrio sulfidiphilus (strain HL-EbGR7)).